A 596-amino-acid polypeptide reads, in one-letter code: UvrABC system protein C (596 aa).

The region spanning 14-91 (DQPGCYLMKD…IKLHDPKYNV (78 aa)) is the GIY-YIG domain. In terms of domain architecture, UVR spans 196-231 (EAVKKELEVKMLAAAENLEFERAKEFRDQIAHIDTV).

Belongs to the UvrC family. As to quaternary structure, interacts with UvrB in an incision complex.

The protein resides in the cytoplasm. Its function is as follows. The UvrABC repair system catalyzes the recognition and processing of DNA lesions. UvrC both incises the 5' and 3' sides of the lesion. The N-terminal half is responsible for the 3' incision and the C-terminal half is responsible for the 5' incision. This Lysinibacillus sphaericus (strain C3-41) protein is UvrABC system protein C.